Here is a 208-residue protein sequence, read N- to C-terminus: Large ribosomal subunit protein uL3 (208 aa).

The segment at 122-148 is disordered; the sequence is KRHGQSRGPMAHGSRYHRRPGSMGPVA.

This sequence belongs to the universal ribosomal protein uL3 family. As to quaternary structure, part of the 50S ribosomal subunit. Forms a cluster with proteins L14 and L19.

Functionally, one of the primary rRNA binding proteins, it binds directly near the 3'-end of the 23S rRNA, where it nucleates assembly of the 50S subunit. This chain is Large ribosomal subunit protein uL3, found in Streptococcus pyogenes serotype M1.